The primary structure comprises 1470 residues: Transient receptor potential cation channel subfamily M member 2 (1470 aa).

Topologically, residues 1–725 (MDEAALEPTL…GELSVDNPHW (725 aa)) are cytoplasmic. Residues Tyr267, Arg274, 305 to 308 (GPGT), and Arg330 each bind ADP-D-ribose. An intramembrane segment occupies 726–738 (KVLLCMIFFPLIY). At 739-808 (TGFLTFRRDE…MSFLKSPQVK (70 aa)) the chain is on the cytoplasmic side. The chain crosses the membrane as a helical span at residues 809–829 (FYWNIASYFGFLWLFAVVLMI). The Extracellular segment spans residues 830-836 (DFQTSPS). A helical membrane pass occupies residues 837–857 (WRELLLYVWLTSLVCEEIRQL). The Ca(2+) site is built by Glu853 and Gln856. At 858-876 (YHDFDGSGFRRKAKMYIKD) the chain is on the cytoplasmic side. A helical transmembrane segment spans residues 877 to 897 (LWNILDVLSIVLFIAGLICRL). Position 879 (Asn879) interacts with Ca(2+). Topologically, residues 898 to 905 (QASDTVFY) are extracellular. Residues 906-926 (IGKVILCIDFIIFCLRLMAIF) traverse the membrane as a helical segment. The Cytoplasmic portion of the chain corresponds to 927 to 941 (SISRTLGPKIIIVRR). Residues 942–968 (MMLDLFFFMFLLSIWVVAYGVAKQGIL) traverse the membrane as a helical segment. Over 969–977 (IENEERLNW) the chain is Extracellular. Residues 978–1002 (IIRGAVYEPYITIFGNFPTNIDNTL) constitute an intramembrane region (pore-forming). The Selectivity filter motif lies at 991-993 (FGN). Residues 1003 to 1034 (FDISSCSVNASDPLKPKCPMLNADNTPVFPEW) lie on the Extracellular side of the membrane. Cys1008 and Cys1020 are disulfide-bonded. Asn1011 is a glycosylation site (N-linked (GlcNAc...) asparagine). A helical membrane pass occupies residues 1035 to 1059 (LTIMMLCVYLLFANILLLNLLIAIF). The Cytoplasmic segment spans residues 1060-1087 (NYTFQEVQDNTDTIWKFQRYELIKEYHS). A Ca(2+)-binding site is contributed by Glu1084. Residues 1088-1105 (RPALPPPFILLSHLILFI) lie within the membrane without spanning it. At 1106-1470 (RGVFLRDLPQ…QIAHHHNTYF (365 aa)) the chain is on the cytoplasmic side. Residues 1157–1470 (HRIHDTAEKV…QIAHHHNTYF (314 aa)) are divergent Nudix hydrolase-like domain. Disordered stretches follow at residues 1215-1256 (KSKV…LQYP) and 1281-1314 (PPVY…GKGA). Over residues 1231-1244 (DDGDSSGQETDDEE) the composition is skewed to acidic residues. A compositionally biased stretch (polar residues) spans 1283–1295 (VYNQQDSSESDTS). ADP-D-ribose contacts are provided by Asp1398 and Arg1400.

It belongs to the transient receptor (TC 1.A.4) family. LTrpC subfamily. TRPM2 sub-subfamily. In terms of assembly, homotetramer.

It is found in the cell membrane. It catalyses the reaction Ca(2+)(in) = Ca(2+)(out). The enzyme catalyses Na(+)(in) = Na(+)(out). Its activity is regulated as follows. Activated by intracellular ADP-ribose. Ca(2+) and PI(4,5)P2 are required for channel opening by ADP-ribose. Functionally, nonselective, voltage-independent cation channel that mediates Ca(2+) influx, leading to increased cytoplasmic Ca(2+) levels. Functions as a ligand-gated ion channel, gated by intracellular adenosine diphosphate ribose (ADP-ribose), Ca(2+), warm temperature, and oxidative stress. Binding of ADP-ribose to the cytoplasmic N-terminal region causes a conformation change; the channel is primed but still requires Ca(2+) binding to trigger channel opening. The sequence is that of Transient receptor potential cation channel subfamily M member 2 from Danio rerio (Zebrafish).